The sequence spans 609 residues: RAS guanyl-releasing protein 2 (609 aa).

Residue A2 is the site of N-myristoyl glycine attachment. The 123-residue stretch at 4–126 folds into the N-terminal Ras-GEF domain; sequence TLDLDKGCTV…SLIDIDSVPT (123 aa). L7 carries S-palmitoyl cysteine lipidation. S116, S117, and S147 each carry phosphoserine. The region spanning 154 to 387 is the Ras-GEF domain; that stretch reads EPMELAEHLT…YQLSLQREPR (234 aa). Residues 382 to 406 are disordered; the sequence is LQREPRSKSSPTSPTSCTPPPRPPV. 2 EF-hand domains span residues 426–461 and 455–490; these read HIEK…FPYL and RGNF…SSSV. Ca(2+) is bound by residues D439, D441, D443, H445, E450, D468, N470, D472, C474, and E479. A Phorbol-ester/DAG-type zinc finger spans residues 498-548; sequence VHNFQESNSLRPVACRHCKALILGIYKQGLKCRACGVNCHKQCKDRLSVEC. S554 and S576 each carry phosphoserine. The disordered stretch occupies residues 557-592; sequence LEGSAPSPSPMHSHHHRAFSFSLPRPGRRGSRPPEI.

It belongs to the RASGRP family. Forms a signaling complex with RAP1 and BRAF. Interacts with RAP1. Interacts with F-actin. Isoform 2 is palmitoylated and myristoylated. As to expression, detected in platelets, neutrophils and T lymphocytes (at protein level). Expressed in brain where it is enriched in the striatum. Also expressed in the hematopoietic system. Detected in heart, brain, lung, placenta, liver, skeletal muscle and kidney.

The protein localises to the cytoplasm. It localises to the cytosol. Its subcellular location is the cell membrane. The protein resides in the synapse. It is found in the synaptosome. The protein localises to the cell projection. It localises to the ruffle membrane. With respect to regulation, isoform 1 and isoform 2 are differently regulated by calcium and DAG. Functions as a calcium- and DAG-regulated nucleotide exchange factor specifically activating Rap through the exchange of bound GDP for GTP. May also activate other GTPases such as RRAS, RRAS2, NRAS, KRAS but not HRAS. Functions in aggregation of platelets and adhesion of T-lymphocytes and neutrophils probably through inside-out integrin activation. May function in the muscarinic acetylcholine receptor M1/CHRM1 signaling pathway. In Homo sapiens (Human), this protein is RAS guanyl-releasing protein 2 (RASGRP2).